Reading from the N-terminus, the 534-residue chain is Signal recognition particle subunit SRP54 (534 aa).

A G-domain region spans residues 1 to 296 (MVLQDLGRRI…EPKAFIQKLL (296 aa)). GTP is bound by residues 109–116 (GLQGAGKT), 191–195 (DTSGR), and 249–252 (TKTD). The segment at 297–534 (GMGDMAGLVE…GGGGGRGRGR (238 aa)) is M-domain.

The protein belongs to the GTP-binding SRP family. SRP54 subfamily. In terms of assembly, fungal signal recognition particle consists of a 7S RNA molecule (scR1) and at least six protein subunits: srp72, srp68, srpA/srp54, sec65, srp21 and srp14.

It is found in the cytoplasm. The protein localises to the endoplasmic reticulum. The catalysed reaction is GTP + H2O = GDP + phosphate + H(+). Functionally, signal-recognition-particle (SRP) assembly has a crucial role in targeting secretory proteins to the rough endoplasmic reticulum (ER) membrane. SRP is required for the cotranslational protein translocation for ER import and preferentially recognizes strongly hydrophobic signal sequences. It is involved in targeting the nascent chain-ribosome (RNC) complex to the ER and is proposed to participate in the arrest of nascent chain elongation during membrane targeting. srpA/srp54 binds to the signal sequence of presecretory protein when they emerge from the ribosomes. srpA/srp54 interacts with the scR1 RNA and mediates the association of the resulting SRP-RNC complex with the signal recognition particle receptor (SR) via its alpha subunit srp101. Both, srpA/srp54 and srp101, are locked in their GTP bound forms in the SRP-RNC-SR complex, which dissociates upon transferring the signal sequence to the protein-conducting channel (translocon). After signal sequence transfer, srpA/srp54 and srp101 act as reciprocal GTPase-activating proteins (GAPs), thereby resolving their association. The protein is Signal recognition particle subunit SRP54 (srpA) of Aspergillus niger.